The primary structure comprises 286 residues: Bifunctional protein FolD (286 aa).

Residues G164 to S166, S193, and I234 each bind NADP(+).

The protein belongs to the tetrahydrofolate dehydrogenase/cyclohydrolase family. In terms of assembly, homodimer.

The enzyme catalyses (6R)-5,10-methylene-5,6,7,8-tetrahydrofolate + NADP(+) = (6R)-5,10-methenyltetrahydrofolate + NADPH. The catalysed reaction is (6R)-5,10-methenyltetrahydrofolate + H2O = (6R)-10-formyltetrahydrofolate + H(+). It functions in the pathway one-carbon metabolism; tetrahydrofolate interconversion. In terms of biological role, catalyzes the oxidation of 5,10-methylenetetrahydrofolate to 5,10-methenyltetrahydrofolate and then the hydrolysis of 5,10-methenyltetrahydrofolate to 10-formyltetrahydrofolate. This Nitratidesulfovibrio vulgaris (strain ATCC 29579 / DSM 644 / CCUG 34227 / NCIMB 8303 / VKM B-1760 / Hildenborough) (Desulfovibrio vulgaris) protein is Bifunctional protein FolD.